A 265-amino-acid polypeptide reads, in one-letter code: 4-hydroxy-tetrahydrodipicolinate reductase (265 aa).

9–14 serves as a coordination point for NAD(+); the sequence is GPRGRM. K37 lines the NADP(+) pocket. NAD(+)-binding positions include 99–101 and 125–128; these read GTT and APNF. Residue H155 is the Proton donor/acceptor of the active site. H156 provides a ligand contact to (S)-2,3,4,5-tetrahydrodipicolinate. The active-site Proton donor is K159. (S)-2,3,4,5-tetrahydrodipicolinate is bound at residue 165–166; the sequence is GT. A compositionally biased stretch (basic and acidic residues) spans 178–190; the sequence is RESQKQGHPKEEE. The disordered stretch occupies residues 178–200; that stretch reads RESQKQGHPKEEETLPGARGADM.

The protein belongs to the DapB family.

Its subcellular location is the cytoplasm. It catalyses the reaction (S)-2,3,4,5-tetrahydrodipicolinate + NAD(+) + H2O = (2S,4S)-4-hydroxy-2,3,4,5-tetrahydrodipicolinate + NADH + H(+). The catalysed reaction is (S)-2,3,4,5-tetrahydrodipicolinate + NADP(+) + H2O = (2S,4S)-4-hydroxy-2,3,4,5-tetrahydrodipicolinate + NADPH + H(+). Its pathway is amino-acid biosynthesis; L-lysine biosynthesis via DAP pathway; (S)-tetrahydrodipicolinate from L-aspartate: step 4/4. Catalyzes the conversion of 4-hydroxy-tetrahydrodipicolinate (HTPA) to tetrahydrodipicolinate. The protein is 4-hydroxy-tetrahydrodipicolinate reductase of Oceanobacillus iheyensis (strain DSM 14371 / CIP 107618 / JCM 11309 / KCTC 3954 / HTE831).